A 447-amino-acid polypeptide reads, in one-letter code: MDQTCSLESFLNHVQKRDPHQTEFAQAVREVMTTLWPFLEQNPRYRHMSLLERLVEPERVIQFRVVWLDDKNQVQVNRAWRVQFNSAIGPYKGGMRFHPSVNLSILKFLGFEQTFKNALTTLPMGGGKGGSDFDPKGKSEGEVMRFCQALMTELYRHLGPDTDVPAGDIGVGGREVGFMAGMMRKLSNNSSCVFTGKGLSFGGSLIRPEATGYGLVYFTEAMLKRHGLGFEGMRVAVSGSGNVAQYAIEKAMAFGARVVTASDSSGTVVDESGFTPEKLARLCEIKASRDGRVADYAREFGLTYLEGQQPWSVPVDIALPCATQNELDVDAARVLIANGVKAVAEGANMPTTIEATDLFLEAGVLFAPGKAANAGGVATSGLEMAQNAARLSWKAEKVDARLHHIMLDIHHACVEYGGDNKHTNYVQGANIAGFVKVADAMLAQGVI.

Residues lysine 92, glutamine 113, and lysine 116 each coordinate substrate. Lysine 128 serves as the catalytic Proton donor. Substrate is bound at residue glycine 167. Residues threonine 211 and asparagine 242 each coordinate NADP(+). Substrate is bound at residue serine 380.

It belongs to the Glu/Leu/Phe/Val dehydrogenases family. In terms of assembly, homohexamer.

The catalysed reaction is L-glutamate + NADP(+) + H2O = 2-oxoglutarate + NH4(+) + NADPH + H(+). Its function is as follows. Catalyzes the reversible oxidative deamination of glutamate to alpha-ketoglutarate and ammonia. The protein is NADP-specific glutamate dehydrogenase (gdhA) of Salmonella typhimurium (strain LT2 / SGSC1412 / ATCC 700720).